The following is a 75-amino-acid chain: Translation initiation factor IF-1 (75 aa).

In terms of domain architecture, S1-like spans 1-75 (MANLPKEQKL…SKGRIVYRFK (75 aa)).

This sequence belongs to the IF-1 family. Component of the 30S ribosomal translation pre-initiation complex which assembles on the 30S ribosome in the order IF-2 and IF-3, IF-1 and N-formylmethionyl-tRNA(fMet); mRNA recruitment can occur at any time during PIC assembly.

The protein resides in the cytoplasm. In terms of biological role, one of the essential components for the initiation of protein synthesis. Stabilizes the binding of IF-2 and IF-3 on the 30S subunit to which N-formylmethionyl-tRNA(fMet) subsequently binds. Helps modulate mRNA selection, yielding the 30S pre-initiation complex (PIC). Upon addition of the 50S ribosomal subunit IF-1, IF-2 and IF-3 are released leaving the mature 70S translation initiation complex. The polypeptide is Translation initiation factor IF-1 (Mesomycoplasma hyopneumoniae (strain 232) (Mycoplasma hyopneumoniae)).